The chain runs to 290 residues: L-fucono-1,5-lactonase (290 aa).

Belongs to the metallo-dependent hydrolases superfamily.

It carries out the reaction L-fucono-1,5-lactone + H2O = L-fuconate + H(+). The enzyme catalyses L-fucono-1,4-lactone + H2O = L-fuconate + H(+). It catalyses the reaction D-arabinono-1,4-lactone + H2O = D-arabinonate + H(+). The catalysed reaction is L-xylono-1,4-lactone + H2O = L-xylonate + H(+). It carries out the reaction L-galactono-1,4-lactone + H2O = L-galactonate + H(+). Catalyzes the hydrolysis of L-fucono-1,5-lactone to L-fuconate. Can also hydrolyze L-fucono-1,4-lactone, L-galactono-1,4-lactone D-arabinono-1,4-lactone and L-xylono-1,4-lactone. The polypeptide is L-fucono-1,5-lactonase (Burkholderia ambifaria (strain ATCC BAA-244 / DSM 16087 / CCUG 44356 / LMG 19182 / AMMD) (Burkholderia cepacia (strain AMMD))).